Reading from the N-terminus, the 452-residue chain is GATA-binding factor 2 (452 aa).

Positions 130–182 are disordered; that stretch reads GGSLYPGTGSSACPSSSHSSPHLFGFPPTPPKDVSPDPGPASPPSSSRLEDKD. Positions 139-151 are enriched in low complexity; the sequence is SSACPSSSHSSPH. Over residues 156 to 172 the composition is skewed to pro residues; it reads PPTPPKDVSPDPGPASP. 2 GATA-type zinc fingers span residues 267 to 291 and 321 to 345; these read CVNC…CNAC and CANC…CNAC. Residues 426-438 are compositionally biased toward polar residues; it reads QTPTPIHPSSSLS. A disordered region spans residues 426 to 452; that stretch reads QTPTPIHPSSSLSFGHPHHSSMVTAMG.

Expressed in the developing ventral blood island, and in the embryonic nervous system.

The protein resides in the nucleus. The polypeptide is GATA-binding factor 2 (gata2) (Xenopus laevis (African clawed frog)).